An 811-amino-acid chain; its full sequence is Beta-catenin homolog sys-1 (811 aa).

Residues 1-105 (MHSTGEPQRG…SRGPAAPAQN (105 aa)) form a disordered region. Low complexity predominate over residues 64–103 (QQQQMTPQALSTQQQQQVQQQQQRQLYSSPSPSRGPAAPA).

In terms of assembly, interacts with TCF transcription factor pop-1 (via N-terminal region); interaction is direct.

The protein resides in the nucleus. It localises to the cytoplasm. Its subcellular location is the cytoplasmic granule. It is found in the cytoskeleton. The protein localises to the microtubule organizing center. The protein resides in the centrosome. It localises to the chromosome. Its subcellular location is the centromere. It is found in the kinetochore. Its function is as follows. Transcription coregulator. Part of the Wnt signaling asymmetry pathway, probably acting downstream of putative frizzled ligand mom-2, Wnt/frizzled receptors lin-17 and mom-5, and dishevelled homolog dsh-2. Activates or represses target gene expression, depending on upstream Wnt signals and interactions with transcription factors, such as pop-1. Required for the activation of Wnt-responsive genes in the E blastomere; thereby leading to a role in endoderm specification and gut development. Reciprocal distribution patterns of sys-1 and pop-1/TCF in the daughters of anterior-posterior cell divisions functions in specifying cell fate; a higher sys-1 to pop-1 ratio promotes the posterior cell fate, whereas a low sys-1 to pop-1 ratio promotes the anterior fate. Represses expression of homeobox ttx-3 in neuroblasts of the SIAD/SIBV lineage, perhaps acting by blocking its transcriptional activation by a complex consisting of ref-2 and pop-1. Required for early organization of the hermaphrodite, but not the male, gonad; involved in generation of regulatory cells, known as the distal tip cells (DTC), and in formation of the somatic gonadal primordium. Involved in regulating asymmetric divisions of the somatic gonadal precursor cells (SGP), Z1 and Z4. The chain is Beta-catenin homolog sys-1 from Caenorhabditis elegans.